The primary structure comprises 258 residues: Hydroxyacylglutathione hydrolase (258 aa).

Residues His55, His57, Asp59, His60, His115, Asp132, and His170 each contribute to the Zn(2+) site.

This sequence belongs to the metallo-beta-lactamase superfamily. Glyoxalase II family. As to quaternary structure, monomer. It depends on Zn(2+) as a cofactor.

It carries out the reaction an S-(2-hydroxyacyl)glutathione + H2O = a 2-hydroxy carboxylate + glutathione + H(+). Its pathway is secondary metabolite metabolism; methylglyoxal degradation; (R)-lactate from methylglyoxal: step 2/2. In terms of biological role, thiolesterase that catalyzes the hydrolysis of S-D-lactoyl-glutathione to form glutathione and D-lactic acid. The polypeptide is Hydroxyacylglutathione hydrolase (Shewanella halifaxensis (strain HAW-EB4)).